Reading from the N-terminus, the 698-residue chain is Testis-specific gene 10 protein (698 aa).

S163 bears the Phosphoserine mark. Residues 556-689 (QMANERISMQ…SPDRGLDRSL (134 aa)) form an interaction with HIF1A region. Over residues 659 to 670 (HMSSTMKPNTKC) the composition is skewed to polar residues. The segment at 659 to 685 (HMSSTMKPNTKCHSPERAHHRSPDRGL) is disordered. The span at 671–685 (HSPERAHHRSPDRGL) shows a compositional bias: basic and acidic residues. S688 is subject to Phosphoserine.

The protein belongs to the CEP135/TSGA10 family. As to quaternary structure, interacts with HIF1A. In terms of processing, processed into N-terminal 27-kDa and C-terminal 55-kDa fragments. Expressed in the testis, in spermatozoa (at protein level). Expressed in actively dividing fetal tissues, including sternum, intestine, limb, kidney and stomach.

Its subcellular location is the cytoplasm. The protein localises to the cytoskeleton. The protein resides in the microtubule organizing center. It localises to the centrosome. It is found in the centriole. Functionally, plays a role in spermatogenesis. When overexpressed, prevents nuclear localization of HIF1A. The chain is Testis-specific gene 10 protein (TSGA10) from Homo sapiens (Human).